We begin with the raw amino-acid sequence, 260 residues long: Pyridoxine 5'-phosphate synthase (260 aa).

Asn-15 is a 3-amino-2-oxopropyl phosphate binding site. 17–18 (DH) lines the 1-deoxy-D-xylulose 5-phosphate pocket. Position 26 (Arg-26) interacts with 3-amino-2-oxopropyl phosphate. His-51 functions as the Proton acceptor in the catalytic mechanism. Residues Arg-53 and His-58 each contribute to the 1-deoxy-D-xylulose 5-phosphate site. Residue Glu-78 is the Proton acceptor of the active site. Residue Thr-108 coordinates 1-deoxy-D-xylulose 5-phosphate. The active-site Proton donor is His-199. Residues Gly-200 and 221–222 (GH) contribute to the 3-amino-2-oxopropyl phosphate site.

It belongs to the PNP synthase family. Homooctamer; tetramer of dimers.

The protein resides in the cytoplasm. It catalyses the reaction 3-amino-2-oxopropyl phosphate + 1-deoxy-D-xylulose 5-phosphate = pyridoxine 5'-phosphate + phosphate + 2 H2O + H(+). It participates in cofactor biosynthesis; pyridoxine 5'-phosphate biosynthesis; pyridoxine 5'-phosphate from D-erythrose 4-phosphate: step 5/5. Catalyzes the complicated ring closure reaction between the two acyclic compounds 1-deoxy-D-xylulose-5-phosphate (DXP) and 3-amino-2-oxopropyl phosphate (1-amino-acetone-3-phosphate or AAP) to form pyridoxine 5'-phosphate (PNP) and inorganic phosphate. The sequence is that of Pyridoxine 5'-phosphate synthase from Cupriavidus necator (strain ATCC 17699 / DSM 428 / KCTC 22496 / NCIMB 10442 / H16 / Stanier 337) (Ralstonia eutropha).